The chain runs to 214 residues: MVGKLITFEGPDGAGKTSALEAVVARLQKEVSQEIVVTREPGGNPISEQIRQIILDVKNTAMDDRTEALLYAAARRQHIVEKIQPALAADKLVICDRFVDSSIAYQGAGRGIGEEAVAQMNLFATDGLTPDLTLYLDVPSEVGLARIKQHRQNQYDRLDQEKLAFHQKVRQSYLKLAQAHPDRIKTIDASQPLEAVVTQCLQVIAQANLHLFEV.

10 to 17 (GPDGAGKT) serves as a coordination point for ATP.

This sequence belongs to the thymidylate kinase family.

It carries out the reaction dTMP + ATP = dTDP + ADP. Its function is as follows. Phosphorylation of dTMP to form dTDP in both de novo and salvage pathways of dTTP synthesis. In Latilactobacillus sakei subsp. sakei (strain 23K) (Lactobacillus sakei subsp. sakei), this protein is Thymidylate kinase.